A 448-amino-acid polypeptide reads, in one-letter code: Ribulose bisphosphate carboxylase large chain (448 aa).

An N6,N6,N6-trimethyllysine modification is found at lysine 4. Substrate is bound by residues asparagine 113 and threonine 163. Lysine 165 (proton acceptor) is an active-site residue. Lysine 167 contributes to the substrate binding site. Residues lysine 191, aspartate 193, and glutamate 194 each coordinate Mg(2+). Residue lysine 191 is modified to N6-carboxylysine. The active-site Proton acceptor is the histidine 284. Residues arginine 285, histidine 317, and serine 369 each coordinate substrate.

Belongs to the RuBisCO large chain family. Type I subfamily. Heterohexadecamer of 8 large chains and 8 small chains; disulfide-linked. The disulfide link is formed within the large subunit homodimers. Requires Mg(2+) as cofactor. The disulfide bond which can form in the large chain dimeric partners within the hexadecamer appears to be associated with oxidative stress and protein turnover.

It is found in the plastid. The protein localises to the chloroplast. The enzyme catalyses 2 (2R)-3-phosphoglycerate + 2 H(+) = D-ribulose 1,5-bisphosphate + CO2 + H2O. The catalysed reaction is D-ribulose 1,5-bisphosphate + O2 = 2-phosphoglycolate + (2R)-3-phosphoglycerate + 2 H(+). Functionally, ruBisCO catalyzes two reactions: the carboxylation of D-ribulose 1,5-bisphosphate, the primary event in carbon dioxide fixation, as well as the oxidative fragmentation of the pentose substrate in the photorespiration process. Both reactions occur simultaneously and in competition at the same active site. This chain is Ribulose bisphosphate carboxylase large chain, found in Eucryphia lucida (Leatherwood).